We begin with the raw amino-acid sequence, 198 residues long: Probable chemoreceptor glutamine deamidase CheD (198 aa).

The protein belongs to the CheD family.

The enzyme catalyses L-glutaminyl-[protein] + H2O = L-glutamyl-[protein] + NH4(+). Its function is as follows. Probably deamidates glutamine residues to glutamate on methyl-accepting chemotaxis receptors (MCPs), playing an important role in chemotaxis. The sequence is that of Probable chemoreceptor glutamine deamidase CheD from Stenotrophomonas maltophilia (strain K279a).